Consider the following 122-residue polypeptide: Large ribosomal subunit protein uL14 (122 aa).

Forms a cluster with proteins L3 and L19. In the 70S ribosome, L14 and L19 interact and together make contacts with the 16S rRNA in bridges B5 and B8. Part of the 50S ribosomal subunit.

In terms of biological role, binds to 23S rRNA. Forms part of two intersubunit bridges in the 70S ribosome. This Rhodopseudomonas palustris (strain ATCC BAA-98 / CGA009) protein is Large ribosomal subunit protein uL14.